A 338-amino-acid chain; its full sequence is Methionyl-tRNA formyltransferase (338 aa).

110-113 (SLLP) provides a ligand contact to (6S)-5,6,7,8-tetrahydrofolate.

The protein belongs to the Fmt family.

The catalysed reaction is L-methionyl-tRNA(fMet) + (6R)-10-formyltetrahydrofolate = N-formyl-L-methionyl-tRNA(fMet) + (6S)-5,6,7,8-tetrahydrofolate + H(+). Attaches a formyl group to the free amino group of methionyl-tRNA(fMet). The formyl group appears to play a dual role in the initiator identity of N-formylmethionyl-tRNA by promoting its recognition by IF2 and preventing the misappropriation of this tRNA by the elongation apparatus. The chain is Methionyl-tRNA formyltransferase from Synechococcus sp. (strain CC9605).